The chain runs to 156 residues: Cytochrome c-type biogenesis protein CcmE 1 (156 aa).

At 1–8 (MNATRKQR) the chain is on the cytoplasmic side. A helical; Signal-anchor for type II membrane protein transmembrane segment spans residues 9-29 (LWLVIGVLTAAALAVTLIALA). Residues 30–156 (LQRNMSYLFT…AAAAPLSGVR (127 aa)) are Periplasmic-facing. His-123 and Tyr-127 together coordinate heme.

This sequence belongs to the CcmE/CycJ family.

The protein localises to the cell inner membrane. In terms of biological role, heme chaperone required for the biogenesis of c-type cytochromes. Transiently binds heme delivered by CcmC and transfers the heme to apo-cytochromes in a process facilitated by CcmF and CcmH. This chain is Cytochrome c-type biogenesis protein CcmE 1, found in Xanthomonas campestris pv. campestris (strain 8004).